The sequence spans 428 residues: Serine--tRNA ligase (428 aa).

Residue 231-233 (TAE) participates in L-serine binding. Position 262–264 (262–264 (RAE)) interacts with ATP. Glutamate 285 lines the L-serine pocket. 349-352 (EISS) is a binding site for ATP. Serine 385 lines the L-serine pocket.

Belongs to the class-II aminoacyl-tRNA synthetase family. Type-1 seryl-tRNA synthetase subfamily. Homodimer. The tRNA molecule binds across the dimer.

The protein localises to the cytoplasm. It catalyses the reaction tRNA(Ser) + L-serine + ATP = L-seryl-tRNA(Ser) + AMP + diphosphate + H(+). The enzyme catalyses tRNA(Sec) + L-serine + ATP = L-seryl-tRNA(Sec) + AMP + diphosphate + H(+). It participates in aminoacyl-tRNA biosynthesis; selenocysteinyl-tRNA(Sec) biosynthesis; L-seryl-tRNA(Sec) from L-serine and tRNA(Sec): step 1/1. Its function is as follows. Catalyzes the attachment of serine to tRNA(Ser). Is also able to aminoacylate tRNA(Sec) with serine, to form the misacylated tRNA L-seryl-tRNA(Sec), which will be further converted into selenocysteinyl-tRNA(Sec). This Methylorubrum populi (strain ATCC BAA-705 / NCIMB 13946 / BJ001) (Methylobacterium populi) protein is Serine--tRNA ligase.